The following is a 459-amino-acid chain: MAARNWSRVWVGGTVILISFIAFSSQIFVIWPWYGREISLDLLKLLVPLNLAAFMIFWNYRLCVITSPGSVPEGWRPNIGAMDGMEVKKGTHTPRYCKNCEHYKPPRAHHCRQCKTCWLKLDHHCPWIGNCVGFYNQGHFIRFLLWVDIGTTFHLIIMVRRVLYIAEYYHQEPTLADVLFLVFNFATCVPVWLCVGMFSIYHVYLACGNSTTIEGWEKDKVATLIRRGKIKEVKYPYNIGIYKNIKSVLGPNPFLWLWPQKMQGDGLSFPVNPSAGDHTTQYFWPPQDPSRLPNPPPIPAHASPFVYGNNGFNPNLQPTNSLRARRSSTPHIDEDEHSHERDQYRHYSSGEERDNDSISTSSSPKPYLSDYDHYDEGPMYPGERMTALIPRVRRGSEGWEVAPGGGWNAYSGMMDEEVGWDDEVGYDEAPGEGPYVERPWEMRGRYNVYDTEEESGYAH.

The Cytoplasmic segment spans residues 1–9; the sequence is MAARNWSRV. Residues 10 to 30 form a helical membrane-spanning segment; sequence WVGGTVILISFIAFSSQIFVI. The Lumenal segment spans residues 31 to 37; that stretch reads WPWYGRE. The chain crosses the membrane as a helical span at residues 38 to 58; that stretch reads ISLDLLKLLVPLNLAAFMIFW. The Cytoplasmic segment spans residues 59-138; it reads NYRLCVITSP…GNCVGFYNQG (80 aa). Residues 95–145 enclose the DHHC domain; the sequence is RYCKNCEHYKPPRAHHCRQCKTCWLKLDHHCPWIGNCVGFYNQGHFIRFLL. Cys125 acts as the S-palmitoyl cysteine intermediate in catalysis. A helical transmembrane segment spans residues 139–159; the sequence is HFIRFLLWVDIGTTFHLIIMV. The Lumenal segment spans residues 160 to 177; sequence RRVLYIAEYYHQEPTLAD. Residues 178–198 traverse the membrane as a helical segment; that stretch reads VLFLVFNFATCVPVWLCVGMF. Topologically, residues 199–459 are cytoplasmic; the sequence is SIYHVYLACG…DTEEESGYAH (261 aa). Positions 278–379 are disordered; sequence HTTQYFWPPQ…DYDHYDEGPM (102 aa). The segment covering 286–299 has biased composition (pro residues); that stretch reads PQDPSRLPNPPPIP. The span at 310-322 shows a compositional bias: polar residues; that stretch reads NGFNPNLQPTNSL. Residues 331–356 are compositionally biased toward basic and acidic residues; sequence HIDEDEHSHERDQYRHYSSGEERDND.

This sequence belongs to the DHHC palmitoyltransferase family. PFA4 subfamily.

It is found in the endoplasmic reticulum membrane. It catalyses the reaction L-cysteinyl-[protein] + hexadecanoyl-CoA = S-hexadecanoyl-L-cysteinyl-[protein] + CoA. In terms of biological role, mediates the reversible addition of palmitate to target proteins, thereby regulating their membrane association and biological function. This chain is Palmitoyltransferase PFA4, found in Cryptococcus neoformans var. neoformans serotype D (strain B-3501A) (Filobasidiella neoformans).